Here is a 1139-residue protein sequence, read N- to C-terminus: Autophagy-related protein 23 (1139 aa).

Disordered stretches follow at residues 1–148, 225–327, 356–388, 475–569, 648–674, 720–767, 786–828, 935–961, and 977–1012; these read MFQR…EMSP, STDK…YDDE, LTTARETSTGLVESLENATRELSKTRDVASVKD, KNEK…DTAG, KKISSSTSDAEASSKMQSEMESIKTEY, RQES…RETE, EDAQ…SKLR, AAVEERDRIEDESATLARRKTRETEDL, and HERDELEQREKEWRKRREELESVEEKAEAETDELRT. Residues 7–18 show a composition bias toward basic and acidic residues; the sequence is SAIDRTIAEEQA. A compositionally biased stretch (low complexity) spans 19 to 37; the sequence is RQQTATQSRSPSRTGSTSS. Coiled coils occupy residues 142 to 170 and 215 to 259; these read KLQEMSPEIRQKLRKLEKLEATYPELLRS and DMVM…STDQ. 4 stretches are compositionally biased toward basic and acidic residues: residues 225–247, 261–273, 373–385, and 475–494; these read STDKDELQKKYNEAEEKAKKLEE, KTSDSETSKDAQD, ATRELSKTRDVAS, and KNEKSDSQTKITDLTKKLES. Positions 323–495 form a coiled coil; it reads SYDDEIPQLQ…TDLTKKLESK (173 aa). The segment covering 496–522 has biased composition (low complexity); sequence PAPAMLTPAATPMPTVLQPAATSATAA. Residues 526–537 are compositionally biased toward basic residues; it reads GKKKNNKKKKGK. A coiled-coil region spans residues 566–1067; sequence DTAGNAELKA…AAQTKLVASS (502 aa). Residues 651 to 661 are compositionally biased toward low complexity; that stretch reads SSSTSDAEASS. Basic and acidic residues-rich tracts occupy residues 728 to 767, 786 to 815, 935 to 945, and 977 to 1011; these read ATKEELANKTKELRDMEKREKDLKRDVERAQKISSDRETE, EDAQRVSGRDLRRSEAEKVEISGRADKAEQ, AAVEERDRIED, and HERDELEQREKEWRKRREELESVEEKAEAETDELR. Residues 1082-1132 enclose the GRIP domain; it reads SPAGAPDTVYLKTILLQFLEQKDTKLRAQLVPVLGKLLRFDKTDEQKWQKA.

The protein belongs to the ATG23 family. In terms of assembly, forms a complex with ATG9 and ATG27.

It localises to the cytoplasm. The protein localises to the preautophagosomal structure membrane. In terms of biological role, required for cytoplasm to vacuole transport (Cvt) vesicle formation and efficient autophagy. Plays a role in ATG protein retrieval from the pre-autophagosomal structure (PAS) and is especially required for autophagy-dependent cycling of ATG9. Autophagy is required for proper vegetative growth, asexual/sexual reproduction, and full virulence. Autophagy is particularly involved in the biosynthesis of deoxynivalenol (DON), an important virulence determinant. This Gibberella zeae (strain ATCC MYA-4620 / CBS 123657 / FGSC 9075 / NRRL 31084 / PH-1) (Wheat head blight fungus) protein is Autophagy-related protein 23.